Here is a 240-residue protein sequence, read N- to C-terminus: Diglucosylglycerate octanoyltransferase (240 aa).

The protein belongs to the OctT acyltransferase family. Homotetramer.

The catalysed reaction is (2R)-2-O-[alpha-D-glucopyranosyl-(1-&gt;6)-alpha-D-glucopyranosyl]-glycerate + octanoyl-CoA = (2R)-2-O-[6-O-octanoyl-alpha-D-glucopyranosyl-(1-&gt;6)-alpha-D-glucopyranosyl]-glycerate + CoA. In terms of biological role, sugar octanoyltransferase likely involved in the biosynthesis of mycobacterial methylglucose lipopolysaccharide (MGLP). Catalyzes the transfer of an octanoyl group from octanoyl-CoA to the C6 OH of the second glucose in diglucosylglycerate (DGG). Can also use hexanoyl-CoA as acyl donor in vitro. DGG is the preferred acceptor, but to a lesser extent, GG (glucosylglycerate) can be used as substrate. DGG and GG are the two earliest intermediates in MGLP biosynthesis. This chain is Diglucosylglycerate octanoyltransferase, found in Mycolicibacterium hassiacum (strain DSM 44199 / CIP 105218 / JCM 12690 / 3849) (Mycobacterium hassiacum).